Consider the following 294-residue polypeptide: N-acetylmuramic acid 6-phosphate etherase (294 aa).

Positions 56–219 constitute an SIS domain; the sequence is TSYSLKNGGR…STLSMVSVGK (164 aa). The Proton donor role is filled by glutamate 84. Glutamate 115 is a catalytic residue.

The protein belongs to the GCKR-like family. MurNAc-6-P etherase subfamily. In terms of assembly, homodimer.

It carries out the reaction N-acetyl-D-muramate 6-phosphate + H2O = N-acetyl-D-glucosamine 6-phosphate + (R)-lactate. The protein operates within amino-sugar metabolism; 1,6-anhydro-N-acetylmuramate degradation. It participates in amino-sugar metabolism; N-acetylmuramate degradation. Its pathway is cell wall biogenesis; peptidoglycan recycling. Functionally, specifically catalyzes the cleavage of the D-lactyl ether substituent of MurNAc 6-phosphate, producing GlcNAc 6-phosphate and D-lactate. Together with AnmK, is also required for the utilization of anhydro-N-acetylmuramic acid (anhMurNAc) either imported from the medium or derived from its own cell wall murein, and thus plays a role in cell wall recycling. The sequence is that of N-acetylmuramic acid 6-phosphate etherase from Francisella tularensis subsp. novicida (strain U112).